The primary structure comprises 403 residues: Heparan-sulfate 6-O-sulfotransferase 2 (403 aa).

Over 1-7 the chain is Cytoplasmic; that stretch reads MEDRSHK. Residues 8–28 form a helical; Signal-anchor for type II membrane protein membrane-spanning segment; it reads VLLALVMLFLFAVIVLQYVCP. Topologically, residues 29 to 403 are lumenal; the sequence is GTECQLLRLR…DYLGNVERWR (375 aa). An N-linked (GlcNAc...) asparagine glycan is attached at asparagine 64. A 3'-phosphoadenylyl sulfate-binding site is contributed by 88–96; the sequence is HIQKTGGTT. Residues 118–119, arginine 135, tryptophan 140, and histidine 145 contribute to the substrate site; that span reads KK. Residue histidine 145 is the Proton acceptor of the active site. The 3'-phosphoadenylyl sulfate site is built by arginine 180 and serine 188. Residues histidine 192 and tryptophan 199 each coordinate substrate. Asparagine 259 carries an N-linked (GlcNAc...) asparagine glycan. 312–314 is a 3'-phosphoadenylyl sulfate binding site; the sequence is TQY. A glycan (N-linked (GlcNAc...) asparagine) is linked at asparagine 315. 318–319 is a 3'-phosphoadenylyl sulfate binding site; sequence RA. The interval 381–403 is disordered; the sequence is AHLREQGENSSSTDYLGNVERWR. The N-linked (GlcNAc...) asparagine glycan is linked to asparagine 389.

It belongs to the sulfotransferase 6 family.

The protein localises to the membrane. The catalysed reaction is alpha-D-glucosaminyl-[heparan sulfate](n) + 3'-phosphoadenylyl sulfate = 6-sulfo-alpha-D-glucosaminyl-[heparan sulfate](n) + adenosine 3',5'-bisphosphate + H(+). Functionally, 6-O-sulfation enzyme which catalyzes the transfer of sulfate from 3'-phosphoadenosine 5'-phosphosulfate (PAPS) to position 6 of the N-sulfoglucosamine residue (GlcNS) of heparan sulfate. May also play a role in limb development. In Gallus gallus (Chicken), this protein is Heparan-sulfate 6-O-sulfotransferase 2 (HS6ST2).